A 280-amino-acid polypeptide reads, in one-letter code: Dehydrogenase/reductase SDR family member 2, mitochondrial (280 aa).

Residues 1-23 constitute a mitochondrion transit peptide; it reads MLSAVARGYQGWFHPCARLSVRM. NAD(+)-binding residues include Ser-46 and Ile-48. Lys-96 carries the N6-acetyllysine; alternate modification. An N6-succinyllysine; alternate modification is found at Lys-96. Ser-172 lines the substrate pocket. Positions 185 and 189 each coordinate NAD(+). Tyr-185 functions as the Proton acceptor in the catalytic mechanism. Position 219 is an N6-acetyllysine; alternate (Lys-219). Lys-219 bears the N6-succinyllysine; alternate mark. Residue Thr-220 coordinates NAD(+). Ser-223 carries the post-translational modification Phosphoserine. Lys-237 carries the N6-succinyllysine modification.

This sequence belongs to the short-chain dehydrogenases/reductases (SDR) family. Directly interacts with MDM2; this interaction occurs in the nucleus and does not target DHRS2 to degradation. As to expression, widely expressed, with highest levels in liver and kidney, followed by heart, spleen, skeletal muscle and placenta. In hemopoietic cells, expressed in dendritic cells, but not in monocytes, macrophages, granulocytes, nor in B and T lymphocytes.

Its subcellular location is the mitochondrion matrix. The protein localises to the nucleus. NADPH-dependent oxidoreductase which catalyzes the reduction of dicarbonyl compounds. Displays reductase activity in vitro with 3,4-hexanedione, 2,3-heptanedione and 1-phenyl-1,2-propanedione as substrates. May function as a dicarbonyl reductase in the enzymatic inactivation of reactive carbonyls involved in covalent modification of cellular components. Also displays a minor hydroxysteroid dehydrogenase activity toward bile acids such as ursodeoxycholic acid (UDCA) and isoursodeoxycholic acid (isoUDCA), which makes it unlikely to control hormone levels. Doesn't show any activity in vitro with retinoids and sugars as substrates. Attenuates MDM2-mediated p53/TP53 degradation, leading to p53/TP53 stabilization and increased transcription activity, resulting in the accumulation of MDM2 and CDKN1A/p21. Reduces proliferation, migration and invasion of cancer cells and well as the production of ROS in cancer. The chain is Dehydrogenase/reductase SDR family member 2, mitochondrial from Homo sapiens (Human).